Here is a 243-residue protein sequence, read N- to C-terminus: Proteasome subunit beta (243 aa).

The disordered stretch occupies residues 1–46 (MFNPNNGSEFARNRARLDDTPNPYEPEVGSLPEGDRSQAGSDTVNK). The propeptide at 1–48 (MFNPNNGSEFARNRARLDDTPNPYEPEVGSLPEGDRSQAGSDTVNKTG) is removed in mature form; by autocatalysis. Thr-49 acts as the Nucleophile in catalysis.

This sequence belongs to the peptidase T1B family. The 20S proteasome core is composed of 14 alpha and 14 beta subunits that assemble into four stacked heptameric rings, resulting in a barrel-shaped structure. The two inner rings, each composed of seven catalytic beta subunits, are sandwiched by two outer rings, each composed of seven alpha subunits. The catalytic chamber with the active sites is on the inside of the barrel. Has a gated structure, the ends of the cylinder being occluded by the N-termini of the alpha-subunits. Is capped at one or both ends by the proteasome regulatory ATPase, PAN.

Its subcellular location is the cytoplasm. The enzyme catalyses Cleavage of peptide bonds with very broad specificity.. The formation of the proteasomal ATPase PAN-20S proteasome complex, via the docking of the C-termini of PAN into the intersubunit pockets in the alpha-rings, triggers opening of the gate for substrate entry. Interconversion between the open-gate and close-gate conformations leads to a dynamic regulation of the 20S proteasome proteolysis activity. Functionally, component of the proteasome core, a large protease complex with broad specificity involved in protein degradation. This Halobacterium salinarum (strain ATCC 29341 / DSM 671 / R1) protein is Proteasome subunit beta.